We begin with the raw amino-acid sequence, 318 residues long: NLP effector protein 7 (318 aa).

Positions 1-19 are cleaved as a signal peptide; that stretch reads MRLFAFLWSSVAFLSTVQA. Over residues 23–41 the composition is skewed to low complexity; that stretch reads QTASQTQDDSSTPTPTPTD. 2 disordered regions span residues 23-42 and 51-96; these read QTAS…PTDK and RTKT…TPDP. Residues 55-65 show a composition bias toward polar residues; the sequence is PMATPNRTIMP. Asn-60 carries an N-linked (GlcNAc...) asparagine glycan. Pro residues predominate over residues 73–96; sequence TEPPTPEPTYLPTPSPTPAPTPDP. The short motif at 185–195 is the Conserved undecapeptide motif I element; the sequence is AIMYSWYFPKD. The Hepta-peptide GHRHDWE motif II signature appears at 202–208; that stretch reads GHRHDWE.

This sequence belongs to the Necrosis inducing protein (NPP1) family.

It localises to the secreted. Functionally, secreted effector that contributes moderately to virulence during infection by P.capsici. Does not cause visible reaction of C.annuum for several days after inoculation, but by 7 days after inoculation, small necrotic lesions become visible. Leads only to chlorotic areas, without necrosis at 7 days after non-host N.benthamiana leaves infection. The polypeptide is NLP effector protein 7 (Phytophthora capsici).